Reading from the N-terminus, the 385-residue chain is Glucans biosynthesis protein C (385 aa).

Helical transmembrane passes span 17–37 (AWLM…SHTW), 60–80 (MQVF…RYPL), 91–111 (VGIP…IMLQ), 137–157 (ISHL…VWIF), 173–193 (KFSM…YAVI), 212–232 (FIVM…LAFI), 239–259 (LFTT…VAYL), 274–294 (TESV…FSFG), 311–331 (ASLF…AYIT), and 338–358 (WLGF…LYEI).

This sequence belongs to the acyltransferase 3 family. OpgC subfamily.

The protein resides in the cell membrane. The protein operates within glycan metabolism; osmoregulated periplasmic glucan (OPG) biosynthesis. Necessary for the succinyl substitution of periplasmic glucans. Could catalyze the transfer of succinyl residues from the cytoplasmic side of the membrane to the nascent glucan backbones on the periplasmic side of the membrane. The sequence is that of Glucans biosynthesis protein C from Escherichia coli O139:H28 (strain E24377A / ETEC).